We begin with the raw amino-acid sequence, 338 residues long: P2Y purinoceptor 14 (338 aa).

Topologically, residues 1–29 are extracellular; it reads MINSTSTQPPDESCSQNLLITQQIIPVLY. N3 is a glycosylation site (N-linked (GlcNAc...) asparagine). The helical transmembrane segment at 30 to 50 threads the bilayer; sequence CMVFIAGILLNGVSGWIFFYV. At 51-55 the chain is on the cytoplasmic side; sequence PSSKS. The helical transmembrane segment at 56–76 threads the bilayer; that stretch reads FIIYLKNIVIADFVMSLTFPF. Residues 77 to 96 are Extracellular-facing; sequence KILGDSGLGPWQLNVFVCRV. A disulfide bridge connects residues C94 and C172. The helical transmembrane segment at 97 to 117 threads the bilayer; it reads SAVLFYVNMYVSIVFFGLISF. Residues 118–139 lie on the Cytoplasmic side of the membrane; it reads DRYYKIVKPLWTSFIQSVSYSK. Residues 140–160 form a helical membrane-spanning segment; it reads LLSVIVWMLMLLLAVPNIILT. An N-linked (GlcNAc...) asparagine glycan is attached at N161. Residues 161 to 188 lie on the Extracellular side of the membrane; it reads NQSVREVTQIKCIELKSELGRKWHKASN. The helical transmembrane segment at 189–209 threads the bilayer; that stretch reads YIFVAIFWIVFLLLIVFYTAI. Over 210 to 234 the chain is Cytoplasmic; that stretch reads TKKIFKSHLKSSRNSTSVKKKSSRN. The chain crosses the membrane as a helical span at residues 235-255; it reads IFSIVFVFFVCFVPYHIARIP. The Extracellular segment spans residues 256 to 278; the sequence is YTKSQTEAHYSCQSKEILRYMKE. A helical membrane pass occupies residues 279-299; the sequence is FTLLLSAANVCLDPIIYFFLC. The Cytoplasmic portion of the chain corresponds to 300 to 338; it reads QPFREILCKKLHIPLKAQNDLDISRIKRGNTTLESTDTL.

It belongs to the G-protein coupled receptor 1 family. In terms of tissue distribution, highest expression in the placenta, adipose tissue, stomach and intestine, intermediate levels in the brain, spleen, lung and heart, lowest levels in the kidney.

The protein resides in the cell membrane. Receptor for UDP-glucose and other UDP-sugar coupled to G-proteins. Not activated by ATP, ADP, UTP or ATP. In Homo sapiens (Human), this protein is P2Y purinoceptor 14 (P2RY14).